We begin with the raw amino-acid sequence, 380 residues long: Cytochrome b (380 aa).

Helical transmembrane passes span 33–53 (FGSL…FLAM), 77–98 (WLIR…FIHV), 113–133 (WNIG…GYVL), and 178–198 (FFAF…VHLL). Residues histidine 83 and histidine 97 each contribute to the heme b site. 2 residues coordinate heme b: histidine 182 and histidine 196. Residue histidine 201 participates in a ubiquinone binding. 4 helical membrane passes run 226-246 (IKDL…VLFF), 288-308 (LGGV…PLLN), 320-340 (ITQA…WIGG), and 347-367 (FTLI…IFMP).

It belongs to the cytochrome b family. The cytochrome bc1 complex contains 11 subunits: 3 respiratory subunits (MT-CYB, CYC1 and UQCRFS1), 2 core proteins (UQCRC1 and UQCRC2) and 6 low-molecular weight proteins (UQCRH/QCR6, UQCRB/QCR7, UQCRQ/QCR8, UQCR10/QCR9, UQCR11/QCR10 and a cleavage product of UQCRFS1). This cytochrome bc1 complex then forms a dimer. It depends on heme b as a cofactor.

Its subcellular location is the mitochondrion inner membrane. In terms of biological role, component of the ubiquinol-cytochrome c reductase complex (complex III or cytochrome b-c1 complex) that is part of the mitochondrial respiratory chain. The b-c1 complex mediates electron transfer from ubiquinol to cytochrome c. Contributes to the generation of a proton gradient across the mitochondrial membrane that is then used for ATP synthesis. The chain is Cytochrome b (MT-CYB) from Rhipidomys wetzeli (Wetzel's climbing mouse).